The primary structure comprises 61 residues: Large ribosomal subunit protein uL29 (61 aa).

The protein belongs to the universal ribosomal protein uL29 family.

This chain is Large ribosomal subunit protein uL29, found in Stenotrophomonas maltophilia (strain K279a).